Reading from the N-terminus, the 122-residue chain is MVQSVSAIRRVSRLRRHARLRKKVSGTSERPRLVVNRSARHIHVQLVNDVTGTTVAAASSIEADVRGLQGDKKVRSVRVGQLIAERAKAAGINTVVFDRGGYTYGGRIAALADSVRENGLNF.

This sequence belongs to the universal ribosomal protein uL18 family. In terms of assembly, part of the 50S ribosomal subunit; part of the 5S rRNA/L5/L18/L25 subcomplex. Contacts the 5S and 23S rRNAs.

Its function is as follows. This is one of the proteins that bind and probably mediate the attachment of the 5S RNA into the large ribosomal subunit, where it forms part of the central protuberance. In Mycobacterium leprae (strain TN), this protein is Large ribosomal subunit protein uL18.